Consider the following 398-residue polypeptide: Acetate kinase (398 aa).

Asparagine 7 serves as a coordination point for Mg(2+). Lysine 14 contributes to the ATP binding site. Arginine 96 is a binding site for substrate. Aspartate 153 functions as the Proton donor/acceptor in the catalytic mechanism. ATP contacts are provided by residues 210–214 (HLGNG), 284–286 (DLR), and 332–336 (GIGEH). Glutamate 385 provides a ligand contact to Mg(2+).

This sequence belongs to the acetokinase family. As to quaternary structure, homodimer. Mg(2+) is required as a cofactor. It depends on Mn(2+) as a cofactor.

Its subcellular location is the cytoplasm. It carries out the reaction acetate + ATP = acetyl phosphate + ADP. It participates in metabolic intermediate biosynthesis; acetyl-CoA biosynthesis; acetyl-CoA from acetate: step 1/2. In terms of biological role, catalyzes the formation of acetyl phosphate from acetate and ATP. Can also catalyze the reverse reaction. The polypeptide is Acetate kinase (Acaryochloris marina (strain MBIC 11017)).